The chain runs to 326 residues: MATH domain and coiled-coil domain-containing protein At3g58370 (326 aa).

The MATH domain occupies 7-133 (DNKFTWVIKN…NGEVKIVVEI (127 aa)). Residues 259–312 (LRLDWLEKKLAEVKAKKKKVETGKARLQRAEEELQKLNQKCLELKAFLEKENAD) adopt a coiled-coil conformation.

The polypeptide is MATH domain and coiled-coil domain-containing protein At3g58370 (Arabidopsis thaliana (Mouse-ear cress)).